The chain runs to 377 residues: Killer cell immunoglobulin-like receptor 2DL4 (377 aa).

The first 21 residues, 1-21 (MSMSPTVIILACLGFFLDQSV), serve as a signal peptide directing secretion. Over 22–242 (WAHVGGQDKP…FKTGIARHLH (221 aa)) the chain is Extracellular. Ig-like C2-type domains are found at residues 44–104 (GGHV…HPHS) and 139–202 (GENV…FHGS). Cysteines 51 and 97 form a disulfide. 2 N-linked (GlcNAc...) asparagine glycosylation sites follow: asparagine 141 and asparagine 175. Cysteine 146 and cysteine 195 form a disulfide bridge. The chain crosses the membrane as a helical span at residues 243–263 (AVIRYSVAIILFTILPFFLLH). Over 264–377 (RWCSKKKDAA…ASSNVPAAGI (114 aa)) the chain is Cytoplasmic. Residues 338-377 (PRALSPAHEHHSQALMGSSRETTALSQTQLASSNVPAAGI) are disordered. Residues 352 to 377 (LMGSSRETTALSQTQLASSNVPAAGI) show a composition bias toward polar residues.

Belongs to the immunoglobulin superfamily. Interacts with peptide-bound HLA-G-B2M heterotrimeric complex. Interacts with ARRB2. As to expression, expressed in decidual NK cells and innate lymphoid cell type I (ILC1). Expressed in a subset of peripheral NK cells.

The protein localises to the cell membrane. It localises to the early endosome membrane. Receptor for non-classical major histocompatibility class Ib HLA-G molecules. Recognizes HLA-G in complex with B2M/beta-2 microglobulin and a nonamer self-peptide (peptide-bound HLA-G-B2M). In decidual NK cells, binds peptide-bound HLA-G-B2M complex and triggers NK cell senescence-associated secretory phenotype as a molecular switch to promote vascular remodeling and fetal growth in early pregnancy. May play a role in balancing tolerance and antiviral-immunity at maternal-fetal interface by keeping in check the effector functions of NK, CD8+ T cells and B cells. Upon interaction with peptide-bound HLA-G-B2M, initiates signaling from the endosomal compartment leading to downstream activation of PRKDC-XRCC5 and AKT1, and ultimately triggering NF-kappa-B-dependent pro-inflammatory response. This Homo sapiens (Human) protein is Killer cell immunoglobulin-like receptor 2DL4.